Here is a 351-residue protein sequence, read N- to C-terminus: Translation initiation factor eIF2B subunit beta (351 aa).

Belongs to the eIF-2B alpha/beta/delta subunits family. As to quaternary structure, component of the translation initiation factor 2B (eIF2B) complex which is a heterodecamer of two sets of five different subunits: alpha, beta, gamma, delta and epsilon. Subunits alpha, beta and delta comprise a regulatory subcomplex and subunits epsilon and gamma comprise a catalytic subcomplex. Within the complex, the hexameric regulatory complex resides at the center, with the two heterodimeric catalytic subcomplexes bound on opposite sides.

The protein resides in the cytoplasm. It localises to the cytosol. Its activity is regulated as follows. Activated by the chemical integrated stress response (ISR) inhibitor ISRIB which stimulates guanine nucleotide exchange factor activity for both phosphorylated and unphosphorylated eIF2. Functionally, acts as a component of the translation initiation factor 2B (eIF2B) complex, which catalyzes the exchange of GDP for GTP on eukaryotic initiation factor 2 (eIF2) gamma subunit. Its guanine nucleotide exchange factor activity is repressed when bound to eIF2 complex phosphorylated on the alpha subunit, thereby limiting the amount of methionyl-initiator methionine tRNA available to the ribosome and consequently global translation is repressed. The protein is Translation initiation factor eIF2B subunit beta (EIF2B2) of Bos taurus (Bovine).